The sequence spans 341 residues: B3 domain-containing transcription factor VRN1 (341 aa).

The segment at residues 5–98 (FFHKLIFSST…AFSVYIFNLS (94 aa)) is a DNA-binding region (TF-B3 1). Positions 166 to 223 (GPVKAEEPTPTPKIPKKRGRKKKNADPEEINSSAPRDDDPENRSKFYESASARKRTVT) are disordered. Over residues 179–188 (IPKKRGRKKK) the composition is skewed to basic residues. Basic and acidic residues predominate over residues 200 to 211 (PRDDDPENRSKF). The TF-B3 2 DNA-binding region spans 244–338 (FRVVLRPSYL…VLKVTAFRVN (95 aa)).

Expressed in roots and at lower levels in aerial parts.

The protein resides in the nucleus. Essential protein. Involved in the regulation of vernalization. Acts as a transcriptional repressor of FLC, a major target of the vernalization pathway. Binds DNA in vitro in a non-sequence-specific manner. The polypeptide is B3 domain-containing transcription factor VRN1 (Arabidopsis thaliana (Mouse-ear cress)).